A 158-amino-acid chain; its full sequence is Small ribosomal subunit protein uS9 (158 aa).

Residues 1 to 10 (MSDTMQSLDQ) show a composition bias toward polar residues. The interval 1–35 (MSDTMQSLDQLSALKTAAPDAPKREKKVDKQGRAY) is disordered. Residues 21–32 (APKREKKVDKQG) are compositionally biased toward basic and acidic residues.

Belongs to the universal ribosomal protein uS9 family.

This is Small ribosomal subunit protein uS9 from Afipia carboxidovorans (strain ATCC 49405 / DSM 1227 / KCTC 32145 / OM5) (Oligotropha carboxidovorans).